Reading from the N-terminus, the 436-residue chain is Platelet-activating factor acetylhydrolase (436 aa).

An N-terminal signal peptide occupies residues 1 to 21 (MAPPKLHTLFCLSGFLALVHP). N-linked (GlcNAc...) asparagine glycans are attached at residues asparagine 76 and asparagine 200. Serine 271 acts as the Nucleophile in catalysis. The Charge relay system role is filled by aspartate 294. The N-linked (GlcNAc...) asparagine glycan is linked to asparagine 324. The active-site Charge relay system is the histidine 349.

Belongs to the AB hydrolase superfamily. Lipase family. Post-translationally, N-glycosylated. Plasma.

Its subcellular location is the secreted. The protein localises to the extracellular space. The catalysed reaction is a 1-O-alkyl-2-acetyl-sn-glycero-3-phosphocholine + H2O = a 1-O-alkyl-sn-glycero-3-phosphocholine + acetate + H(+). The enzyme catalyses 1-O-decyl-2-acetyl-sn-glycero-3-phosphocholine + H2O = 1-O-decyl-sn-glycero-3-phosphocholine + acetate + H(+). It carries out the reaction 1-O-dodecyl-2-acetyl-sn-glycero-3-phosphocholine + H2O = 1-O-dodecyl-sn-glycero-3-phosphocholine + acetate + H(+). It catalyses the reaction 1-O-tetradecyl-2-acetyl-sn-glycero-3-phosphocholine + H2O = 1-O-tetradecyl-sn-glycero-3-phosphocholine + acetate + H(+). The catalysed reaction is 1-O-hexadecyl-2-acetyl-sn-glycero-3-phosphocholine + H2O = 1-O-hexadecyl-sn-glycero-3-phosphocholine + acetate + H(+). The enzyme catalyses 1-O-octadecyl-2-acetyl-sn-glycero-3-phosphocholine + H2O = 1-O-octadecyl-sn-glycero-3-phosphocholine + acetate + H(+). It carries out the reaction 1-hexadecanoyl-2-acetyl-sn-glycero-3-phosphocholine + H2O = 1-hexadecanoyl-sn-glycero-3-phosphocholine + acetate + H(+). It catalyses the reaction 1-hexadecanoyl-2-propionyl-sn-glycero-3-phosphocholine + H2O = propanoate + 1-hexadecanoyl-sn-glycero-3-phosphocholine + H(+). The catalysed reaction is 1-hexadecanoyl-2-butanoyl-sn-glycero-3-phosphocholine + H2O = butanoate + 1-hexadecanoyl-sn-glycero-3-phosphocholine + H(+). The enzyme catalyses 1-hexadecanoyl-2-pentanoyl-sn-glycero-3-phosphocholine + H2O = pentanoate + 1-hexadecanoyl-sn-glycero-3-phosphocholine + H(+). It carries out the reaction 1-hexadecanoyl-2-glutaroyl-sn-glycero-3-phosphocholine + H2O = glutarate + 1-hexadecanoyl-sn-glycero-3-phosphocholine + H(+). It catalyses the reaction 1-hexadecanoyl-2-(5-oxopentanoyl)-sn-glycero-3-phosphocholine + H2O = 5-oxopentanoate + 1-hexadecanoyl-sn-glycero-3-phosphocholine + H(+). The catalysed reaction is 1-hexadecanoyl-2-(9-oxononanoyl)-sn-glycero-3-phosphocholine + H2O = 9-oxononanoate + 1-hexadecanoyl-sn-glycero-3-phosphocholine + H(+). The enzyme catalyses 1-hexadecanoyl-2-[9-hydroperoxy-(10E-octadecenoyl)]-sn-glycero-3-phosphocholine + H2O = 9-hydroperoxy-10E-octadecenoate + 1-hexadecanoyl-sn-glycero-3-phosphocholine + H(+). It carries out the reaction 1-hexadecanoyl-2-(10-hydroperoxy-8E-octadecenoyl)-sn-glycero-3-phosphocholine + H2O = 10-hydroperoxy-(8E)-octadecenoate + 1-hexadecanoyl-sn-glycero-3-phosphocholine + H(+). Functionally, lipoprotein-associated calcium-independent phospholipase A2 involved in phospholipid catabolism during inflammatory and oxidative stress response. At the lipid-aqueous interface, hydrolyzes the ester bond of fatty acyl group attached at sn-2 position of phospholipids (phospholipase A2 activity). Specifically targets phospholipids with a short-chain fatty acyl group at sn-2 position. Can hydrolyze phospholipids with long fatty acyl chains, only if they carry oxidized functional groups. Hydrolyzes and inactivates platelet-activating factor (PAF, 1-O-alkyl-2-acetyl-sn-glycero-3-phosphocholine), a potent pro-inflammatory signaling lipid that acts through PTAFR on various innate immune cells. Hydrolyzes oxidatively truncated phospholipids carrying an aldehyde group at omega position, preventing their accumulation in lipoprotein particles and uncontrolled pro-inflammatory effects. As part of high-density lipoprotein (HDL) particles, can hydrolyze phospholipids having long-chain fatty acyl hydroperoxides at sn-2 position and protect against potential accumulation of these oxylipins in the vascular wall. Catalyzes the release from membrane phospholipids of F2-isoprostanes, lipid biomarkers of cellular oxidative damage. The sequence is that of Platelet-activating factor acetylhydrolase (PLA2G7) from Cavia porcellus (Guinea pig).